The chain runs to 146 residues: Hemoglobin subunit beta (146 aa).

Position 1 is an N-acetylvaline (V1). The 145-residue stretch at 2–146 (HLTADEKVSL…VANALAHKYH (145 aa)) folds into the Globin domain. A Phosphoserine modification is found at S44. At K59 the chain carries N6-acetyllysine. H63 lines the heme b pocket. Position 82 is an N6-acetyllysine (K82). Heme b is bound at residue H92. C93 carries the post-translational modification S-nitrosocysteine. K144 carries the post-translational modification N6-acetyllysine.

The protein belongs to the globin family. In terms of assembly, heterotetramer of two alpha chains and two beta chains. Red blood cells.

Involved in oxygen transport from the lung to the various peripheral tissues. The sequence is that of Hemoglobin subunit beta from Tamias striatus (Eastern chipmunk).